Reading from the N-terminus, the 266-residue chain is Vitamin B12-binding protein (266 aa).

An N-terminal signal peptide occupies residues 1–22 (MAKQMFRALVALLLTLPVWLYA). Residues 25 to 266 (RVITLSPANT…QLCNALSQVN (242 aa)) enclose the Fe/B12 periplasmic-binding domain. Cyanocob(III)alamin-binding positions include Y50 and 242-246 (DWFER). C183 and C259 are joined by a disulfide.

Belongs to the BtuF family. The complex is composed of two ATP-binding proteins (BtuD), two transmembrane proteins (BtuC) and a solute-binding protein (BtuF).

It localises to the periplasm. In terms of biological role, part of the ABC transporter complex BtuCDF involved in vitamin B12 import. Binds vitamin B12 and delivers it to the periplasmic surface of BtuC. The chain is Vitamin B12-binding protein from Salmonella paratyphi A (strain ATCC 9150 / SARB42).